Here is a 339-residue protein sequence, read N- to C-terminus: Anthranilate phosphoribosyltransferase (339 aa).

Residues Gly-78, 81–82 (GD), Thr-86, 88–91 (NAST), 106–114 (KHGNRSVTS), and Ser-118 each bind 5-phospho-alpha-D-ribose 1-diphosphate. Residue Gly-78 participates in anthranilate binding. Position 90 (Ser-90) interacts with Mg(2+). Asn-109 is an anthranilate binding site. Arg-164 serves as a coordination point for anthranilate. The Mg(2+) site is built by Asp-225 and Glu-226. A compositionally biased stretch (basic and acidic residues) spans 248–265 (TVAPEDVGLDRADPKDVA). Residues 248–271 (TVAPEDVGLDRADPKDVAGADPET) are disordered.

This sequence belongs to the anthranilate phosphoribosyltransferase family. Homodimer. Mg(2+) serves as cofactor.

It carries out the reaction N-(5-phospho-beta-D-ribosyl)anthranilate + diphosphate = 5-phospho-alpha-D-ribose 1-diphosphate + anthranilate. It functions in the pathway amino-acid biosynthesis; L-tryptophan biosynthesis; L-tryptophan from chorismate: step 2/5. Its function is as follows. Catalyzes the transfer of the phosphoribosyl group of 5-phosphorylribose-1-pyrophosphate (PRPP) to anthranilate to yield N-(5'-phosphoribosyl)-anthranilate (PRA). In Methanopyrus kandleri (strain AV19 / DSM 6324 / JCM 9639 / NBRC 100938), this protein is Anthranilate phosphoribosyltransferase.